A 434-amino-acid polypeptide reads, in one-letter code: Enolase (434 aa).

Gln165 contacts (2R)-2-phosphoglycerate. The active-site Proton donor is Glu207. Mg(2+) contacts are provided by Asp244, Glu291, and Asp318. Lys343, Arg372, Ser373, and Lys394 together coordinate (2R)-2-phosphoglycerate. Lys343 (proton acceptor) is an active-site residue.

This sequence belongs to the enolase family. Mg(2+) is required as a cofactor.

The protein localises to the cytoplasm. It localises to the secreted. It is found in the cell surface. It carries out the reaction (2R)-2-phosphoglycerate = phosphoenolpyruvate + H2O. The protein operates within carbohydrate degradation; glycolysis; pyruvate from D-glyceraldehyde 3-phosphate: step 4/5. Catalyzes the reversible conversion of 2-phosphoglycerate (2-PG) into phosphoenolpyruvate (PEP). It is essential for the degradation of carbohydrates via glycolysis. This is Enolase from Staphylococcus aureus (strain USA300 / TCH1516).